We begin with the raw amino-acid sequence, 134 residues long: Cytochrome c-type biogenesis protein CcmE (134 aa).

At 1 to 7 (MKRKYRR) the chain is on the cytoplasmic side. A helical; Signal-anchor for type II membrane protein transmembrane segment spans residues 8–28 (LFVVIITLSIFAGSVVFVLGK). Residues 29–134 (LKNNVSFFYT…MPNKYKTNNL (106 aa)) are Periplasmic-facing. 2 residues coordinate heme: His120 and Tyr124.

It belongs to the CcmE/CycJ family.

It is found in the cell inner membrane. Heme chaperone required for the biogenesis of c-type cytochromes. Transiently binds heme delivered by CcmC and transfers the heme to apo-cytochromes in a process facilitated by CcmF and CcmH. This is Cytochrome c-type biogenesis protein CcmE from Ehrlichia ruminantium (strain Gardel).